Here is a 133-residue protein sequence, read N- to C-terminus: U-scoloptoxin(05)-Sa1a (133 aa).

The N-terminal stretch at 1-24 is a signal peptide; it reads MPSLCIIALFGTLTFYTLIPSIHT.

It belongs to the scoloptoxin-05 family. Post-translationally, contains 5 disulfide bonds. Expressed by the venom gland.

It is found in the secreted. This Scolopendra alternans (Florida Keys giant centipede) protein is U-scoloptoxin(05)-Sa1a.